The sequence spans 355 residues: Guanine nucleotide-binding protein G(i) subunit alpha-2 (355 aa).

Gly-2 carries the N-myristoyl glycine lipid modification. Cys-3 is lipidated: S-palmitoyl cysteine. One can recognise a G-alpha domain in the interval 32–355 (REVKLLLLGA…KNNLKDCGLF (324 aa)). The segment at 35-48 (KLLLLGAGESGKST) is G1 motif. Residues 40–47 (GAGESGKS), 176–182 (LRTRVKT), 201–205 (DVGGQ), 270–273 (NKKD), and Ala-327 contribute to the GTP site. Residues Ser-47 and Thr-182 each coordinate Mg(2+). The interval 174 to 182 (DVLRTRVKT) is G2 motif. Positions 197–206 (FKMFDVGGQR) are G3 motif. The segment at 266 to 273 (ILFLNKKD) is G4 motif. Residues 325-330 (TCATDT) form a G5 motif region.

It belongs to the G-alpha family. G(i/o/t/z) subfamily. In terms of assembly, g proteins are composed of 3 units; alpha, beta and gamma. The alpha chain contains the guanine nucleotide binding site. In this context, interacts with GNB2. Interacts with UNC5B. Interacts with GPSM1. Interacts with RGS12 and RGS14. Interacts (inactive GDP-bound form) with NUCB1 (via GBA motif); the interaction leads to activation of GNAI3. Interacts (inactive GDP-bound form) with CCDC88C/DAPLE (via GBA motif). Interacts (inactive GDP-bound form) with CCDC8A/GIV (via GBA motif). Interacts with CXCR1 and CXCR2.

Its subcellular location is the cytoplasm. The protein localises to the cytoskeleton. It localises to the microtubule organizing center. It is found in the centrosome. The protein resides in the cell membrane. Its subcellular location is the membrane. In terms of biological role, guanine nucleotide-binding proteins (G proteins) are involved as modulators or transducers in various transmembrane signaling systems. The G(i) proteins are involved in hormonal regulation of adenylate cyclase: they inhibit the cyclase in response to beta-adrenergic stimuli. May play a role in cell division. The protein is Guanine nucleotide-binding protein G(i) subunit alpha-2 (GNAI2) of Canis lupus familiaris (Dog).